The following is a 239-amino-acid chain: Pyridoxine 5'-phosphate synthase (239 aa).

N7 lines the 3-amino-2-oxopropyl phosphate pocket. Position 9-10 (9-10 (DH)) interacts with 1-deoxy-D-xylulose 5-phosphate. Residue R18 coordinates 3-amino-2-oxopropyl phosphate. The active-site Proton acceptor is the H43. Residues R45 and H50 each coordinate 1-deoxy-D-xylulose 5-phosphate. Residue E70 is the Proton acceptor of the active site. T100 is a 1-deoxy-D-xylulose 5-phosphate binding site. H191 functions as the Proton donor in the catalytic mechanism. Residues G192 and 213-214 (GH) contribute to the 3-amino-2-oxopropyl phosphate site.

This sequence belongs to the PNP synthase family. Homooctamer; tetramer of dimers.

Its subcellular location is the cytoplasm. The catalysed reaction is 3-amino-2-oxopropyl phosphate + 1-deoxy-D-xylulose 5-phosphate = pyridoxine 5'-phosphate + phosphate + 2 H2O + H(+). It participates in cofactor biosynthesis; pyridoxine 5'-phosphate biosynthesis; pyridoxine 5'-phosphate from D-erythrose 4-phosphate: step 5/5. Functionally, catalyzes the complicated ring closure reaction between the two acyclic compounds 1-deoxy-D-xylulose-5-phosphate (DXP) and 3-amino-2-oxopropyl phosphate (1-amino-acetone-3-phosphate or AAP) to form pyridoxine 5'-phosphate (PNP) and inorganic phosphate. This chain is Pyridoxine 5'-phosphate synthase, found in Geobacter sulfurreducens (strain ATCC 51573 / DSM 12127 / PCA).